A 255-amino-acid chain; its full sequence is Aliphatic sulfonates import ATP-binding protein SsuB (255 aa).

Positions 12-233 (LLLNAVSKHY…RLGSVRLAEL (222 aa)) constitute an ABC transporter domain. Residue 44-51 (GRSGGGKS) participates in ATP binding.

This sequence belongs to the ABC transporter superfamily. Aliphatic sulfonates importer (TC 3.A.1.17.2) family. In terms of assembly, the complex is composed of two ATP-binding proteins (SsuB), two transmembrane proteins (SsuC) and a solute-binding protein (SsuA).

The protein localises to the cell inner membrane. The catalysed reaction is ATP + H2O + aliphatic sulfonate-[sulfonate-binding protein]Side 1 = ADP + phosphate + aliphatic sulfonateSide 2 + [sulfonate-binding protein]Side 1.. In terms of biological role, part of the ABC transporter complex SsuABC involved in aliphatic sulfonates import. Responsible for energy coupling to the transport system. This chain is Aliphatic sulfonates import ATP-binding protein SsuB, found in Shigella flexneri serotype 5b (strain 8401).